Consider the following 192-residue polypeptide: MTKDVVVEHGESSKAPLVAAPAASGVGRAASVADVFLRFLAIVGTIASAISMGTTNETLPFFTQFIQFEAKYSDLPSFTFFVAANAVVCTYLVLSIPLSIVHIVRPRARYSRLVLVFFDAAMLTLLTAGASAAAAIVYLAHKGNVRANWFAICQQFDSFCERISGSLIGSFAAMVLLIMLIFLSAFALARRH.

Residues 1–31 (MTKDVVVEHGESSKAPLVAAPAASGVGRAAS) lie on the Cytoplasmic side of the membrane. The helical transmembrane segment at 32-52 (VADVFLRFLAIVGTIASAISM) threads the bilayer. At 53–79 (GTTNETLPFFTQFIQFEAKYSDLPSFT) the chain is on the extracellular side. N-linked (GlcNAc...) asparagine glycosylation is present at Asn-56. The helical transmembrane segment at 80-100 (FFVAANAVVCTYLVLSIPLSI) threads the bilayer. At 101–112 (VHIVRPRARYSR) the chain is on the cytoplasmic side. Residues 113-133 (LVLVFFDAAMLTLLTAGASAA) form a helical membrane-spanning segment. Residues 134–166 (AAIVYLAHKGNVRANWFAICQQFDSFCERISGS) are Extracellular-facing. The helical transmembrane segment at 167–187 (LIGSFAAMVLLIMLIFLSAFA) threads the bilayer. Residues 188–192 (LARRH) lie on the Cytoplasmic side of the membrane.

The protein belongs to the Casparian strip membrane proteins (CASP) family. In terms of assembly, homodimer and heterodimers.

The protein localises to the cell membrane. Functionally, regulates membrane-cell wall junctions and localized cell wall deposition. Required for establishment of the Casparian strip membrane domain (CSD) and the subsequent formation of Casparian strips, a cell wall modification of the root endodermis that determines an apoplastic barrier between the intraorganismal apoplasm and the extraorganismal apoplasm and prevents lateral diffusion. The polypeptide is Casparian strip membrane protein 2 (Panicum virgatum (Blackwell switchgrass)).